The following is a 284-amino-acid chain: Pantothenate synthetase (284 aa).

Residue 30–37 (MGNLHDGH) coordinates ATP. Residue His37 is the Proton donor of the active site. A (R)-pantoate-binding site is contributed by Gln61. Gln61 serves as a coordination point for beta-alanine. 149 to 152 (GEKD) provides a ligand contact to ATP. Gln155 serves as a coordination point for (R)-pantoate. ATP-binding positions include Ile178 and 186-189 (LSSR).

The protein belongs to the pantothenate synthetase family. Homodimer.

It is found in the cytoplasm. It catalyses the reaction (R)-pantoate + beta-alanine + ATP = (R)-pantothenate + AMP + diphosphate + H(+). Its pathway is cofactor biosynthesis; (R)-pantothenate biosynthesis; (R)-pantothenate from (R)-pantoate and beta-alanine: step 1/1. Catalyzes the condensation of pantoate with beta-alanine in an ATP-dependent reaction via a pantoyl-adenylate intermediate. The protein is Pantothenate synthetase of Salmonella heidelberg (strain SL476).